Here is a 929-residue protein sequence, read N- to C-terminus: MAVKSLVFRRKFPLLVTGSLLALQPVAALTVQAADQFDCKVSATGGWDCSPLQNANANLPPRPAHTATSVSTAAAGSSVSGSGGETVEAEPTQRLVTESGGRALKSRSADYSHLDWIPREKLTAAQLAEIGPYCGGSYIEPVRPGMDDGAPSDESPTYVSAKASRYEQEKQIATLAGDVVLRQGSMQVEGDEANLHQLENRGELVGNVKLRDKGMLVVGDHAQVQLDNGEAQVDNAEYVIHKAHARGSALYAKRSENAIIMLKDGTYTRCEPSSNAWTLKGNNVKLNPATGFGTATNATLRVKDFPVFYTPYIYFPIDDRRQSGFLPPSFSSTSDTGFTLVTPYYFNLAPNYDATLYPRYMAKRGMMLEGEFRYLTHSSEGTVNAAYLNDKDDHRENFPDYSKDRWLYGLKNTTGLDSRWLAEVDYTRISDPYYFQDLDTDLGVGSTTYVNQRGTLTYRGDTFTGRLNAQAYQLATTTDVTPYERLPQITFDGFLPYEPGGVKFNYSTEFVRFDRDLDDNIYLNDDGSEWGRRPDAYLQGLARSTGDRVHLEPGMSLPMTRSWGYLTPTLKYLYTKYDLDLDSQGKRTLTTYDETFDSSQDRSLPLVKVDSGLYFDRDTTLAGTQFRQTLEPRAMYLYVPYKDQENIPVFDTSEPSFSYDSLWRENRFSGRDRIGDANQLSLGVTTRFIESNGFERASLSAGQIYYFRDRRVQLPGLSEKDLALMRSKNPNLDLKDPDTDSWRSPYALMGQYRFNRDWRVSSDFNWNPNTSRTESGSAMFHYQPEDNPNKVVNAGYRYREDSRRFNSSTGRFEYGRENDIIKQHDFSVIWPLVPQWSVLARWQYDYNKNRTLEAFGGFEYDSCCWKLRLINRYWLDVDDDAFLNQNEKADRGIFLQIVLKGLGGIVGNKTEMFLDKGIQGYRQREDQAM.

An N-terminal signal peptide occupies residues 1–33 (MAVKSLVFRRKFPLLVTGSLLALQPVAALTVQA). The tract at residues 58–101 (NLPPRPAHTATSVSTAAAGSSVSGSGGETVEAEPTQRLVTESGG) is disordered. A compositionally biased stretch (low complexity) spans 66-90 (TATSVSTAAAGSSVSGSGGETVEAE).

The protein belongs to the LptD family. Component of the lipopolysaccharide transport and assembly complex. Interacts with LptE and LptA.

It is found in the cell outer membrane. Functionally, together with LptE, is involved in the assembly of lipopolysaccharide (LPS) at the surface of the outer membrane. The chain is LPS-assembly protein LptD from Pseudomonas aeruginosa (strain LESB58).